A 108-amino-acid chain; its full sequence is MRHYEIVFLVHPDQSEQVSAMVERYRAQIEAAQGKVHRLEDWGRRVLAYPIQKLVKAHYILMNIECDRQTLAELESNFRFNDAILRHMIIRRDEAVTEASMMMQEVKK.

Belongs to the bacterial ribosomal protein bS6 family.

Functionally, binds together with bS18 to 16S ribosomal RNA. This is Small ribosomal subunit protein bS6 from Dichelobacter nodosus (strain VCS1703A).